The chain runs to 461 residues: MSLDIQSLDIQCEELSDARWAELLPLLQQCQVVRLDDCGLTEARCKDISSALRVNPALAELNLRSNELGDVGVHCVLQGLQSPSCKIQKLSLQNCCLTGAGCGVLSSTLRTLPTLQELHLSDNLLGDAGLQLLCEGLLDPQCRLEKLQLEYCNLSAASCKPLASVLRAKPDFKELTVSNNDINEAGVRVLCQGLKDSPCQLEALKLESCGVTSDNCRDLCGIVASKASLRELALGSNKLGDVGMAELCPGLLHPSSRLRTLWIWECGITAKGCGDLCRVLRAKESLKELSLAGNELGDEGARLLCETLLEPGCQLESLWVKSCSFTAACCSHFSSVLAQNKFLLELQISNNRLEDAGVQELCQGLGQPGSVLRVLWLADCDVSDSSCSSLAATLLANHSLRELDLSNNCLGDAGILQLVESVRQPGCLLEQLVLYDIYWSEEMEDRLQALEKDKPSLRVIS.

S2 carries the N-acetylserine modification. Positions 2–11 are 2 X 5 AA tandem repeats of S-L-D-I-Q; sequence SLDIQSLDIQ. 15 LRR repeats span residues 20 to 48, 49 to 76, 77 to 105, 106 to 133, 134 to 162, 163 to 190, 191 to 219, 220 to 247, 248 to 276, 277 to 304, 305 to 333, 334 to 361, 362 to 390, 391 to 418, and 419 to 447; these read WAELLPLLQQCQVVRLDDCGLTEARCKDI, SSALRVNPALAELNLRSNELGDVGVHCV, LQGLQSPSCKIQKLSLQNCCLTGAGCGVL, SSTLRTLPTLQELHLSDNLLGDAGLQLL, CEGLLDPQCRLEKLQLEYCNLSAASCKPL, ASVLRAKPDFKELTVSNNDINEAGVRVL, CQGLKDSPCQLEALKLESCGVTSDNCRDL, CGIVASKASLRELALGSNKLGDVGMAEL, CPGLLHPSSRLRTLWIWECGITAKGCGDL, CRVLRAKESLKELSLAGNELGDEGARLL, CETLLEPGCQLESLWVKSCSFTAACCSHF, SSVLAQNKFLLELQISNNRLEDAGVQEL, CQGLGQPGSVLRVLWLADCDVSDSSCSSL, AATLLANHSLRELDLSNNCLGDAGILQL, and VESVRQPGCLLEQLVLYDIYWSEEMEDRL. Residue S91 is modified to Phosphoserine.

In terms of assembly, forms high-affinity heterodimers with RNASE1, ANG and RNASE2.

The protein localises to the cytoplasm. It is found in the nucleus. Functionally, ribonuclease inhibitor which inhibits RNASE1, RNASE2 and angiogenin (ANG). May play a role in redox homeostasis. Required to inhibit the cytotoxic tRNA ribonuclease activity of ANG in the cytoplasm in absence of stress. Relocates to the nucleus in response to stress, relieving inhibition of ANG in the cytoplasm, and inhibiting the angiogenic activity of ANG in the nucleus. This Pan troglodytes (Chimpanzee) protein is Ribonuclease inhibitor (RNH1).